The sequence spans 215 residues: FMN-dependent NADH:quinone oxidoreductase 1 (215 aa).

This sequence belongs to the azoreductase type 1 family. Homodimer. Requires FMN as cofactor.

The catalysed reaction is 2 a quinone + NADH + H(+) = 2 a 1,4-benzosemiquinone + NAD(+). It carries out the reaction N,N-dimethyl-1,4-phenylenediamine + anthranilate + 2 NAD(+) = 2-(4-dimethylaminophenyl)diazenylbenzoate + 2 NADH + 2 H(+). Its function is as follows. Quinone reductase that provides resistance to thiol-specific stress caused by electrophilic quinones. In terms of biological role, also exhibits azoreductase activity. Catalyzes the reductive cleavage of the azo bond in aromatic azo compounds to the corresponding amines. The sequence is that of FMN-dependent NADH:quinone oxidoreductase 1 from Lactiplantibacillus plantarum (strain ATCC BAA-793 / NCIMB 8826 / WCFS1) (Lactobacillus plantarum).